A 285-amino-acid chain; its full sequence is Ubiquinone biosynthesis protein COQ4, mitochondrial (285 aa).

Residues 1 to 11 (MPPTVRQGIRT) constitute a mitochondrion transit peptide. Residues His166, Asp167, His170, and Glu182 each contribute to the Zn(2+) site.

Belongs to the COQ4 family. In terms of assembly, component of a multi-subunit COQ enzyme complex, composed of at least COQ3, COQ4, COQ5, COQ6, COQ7 and COQ9. The cofactor is Zn(2+).

It localises to the mitochondrion inner membrane. The catalysed reaction is a 4-hydroxy-3-methoxy-5-(all-trans-polyprenyl)benzoate + H(+) = a 2-methoxy-6-(all-trans-polyprenyl)phenol + CO2. The protein operates within cofactor biosynthesis; ubiquinone biosynthesis. Its function is as follows. Lyase that catalyzes the C1-decarboxylation of 4-hydroxy-3-methoxy-5-(all-trans-polyprenyl)benzoic acid into 2-methoxy-6-(all-trans-polyprenyl)phenol during ubiquinone biosynthesis. The chain is Ubiquinone biosynthesis protein COQ4, mitochondrial from Paracoccidioides brasiliensis (strain Pb18).